A 298-amino-acid chain; its full sequence is Inosose dehydratase (298 aa).

This sequence belongs to the IolE/MocC family. The cofactor is glutathione. Co(2+) serves as cofactor. It depends on Mn(2+) as a cofactor.

It catalyses the reaction scyllo-inosose = 3D-3,5/4-trihydroxycyclohexane-1,2-dione + H2O. The protein operates within polyol metabolism; myo-inositol degradation into acetyl-CoA; acetyl-CoA from myo-inositol: step 2/7. Functionally, catalyzes the dehydration of inosose (2-keto-myo-inositol, 2KMI or 2,4,6/3,5-pentahydroxycyclohexanone) to 3D-(3,5/4)-trihydroxycyclohexane-1,2-dione (D-2,3-diketo-4-deoxy-epi-inositol). The polypeptide is Inosose dehydratase (Clostridium tetani (strain Massachusetts / E88)).